The following is a 60-amino-acid chain: Large ribosomal subunit protein uL30 (60 aa).

It belongs to the universal ribosomal protein uL30 family. In terms of assembly, part of the 50S ribosomal subunit.

This chain is Large ribosomal subunit protein uL30, found in Mycobacteroides abscessus (strain ATCC 19977 / DSM 44196 / CCUG 20993 / CIP 104536 / JCM 13569 / NCTC 13031 / TMC 1543 / L948) (Mycobacterium abscessus).